The following is a 317-amino-acid chain: Alkylsulfatase (317 aa).

Position 78 (H78) interacts with substrate. Positions 105 and 107 each coordinate Fe cation. V108 contributes to the substrate binding site. T132 lines the 2-oxoglutarate pocket. Residue H261 participates in Fe cation binding. Positions 272 and 276 each coordinate 2-oxoglutarate.

The protein belongs to the TfdA dioxygenase family. As to quaternary structure, homotetramer. The cofactor is Fe(2+).

Its function is as follows. Alpha-ketoglutarate-dependent dioxygenase that in vitro catalyzes the oxygenolytic release of sulfite from hexylsulfate. The sequence is that of Alkylsulfatase from Acinetobacter baylyi (strain ATCC 33305 / BD413 / ADP1).